The primary structure comprises 234 residues: Leucyl/phenylalanyl-tRNA--protein transferase (234 aa).

It belongs to the L/F-transferase family.

Its subcellular location is the cytoplasm. It catalyses the reaction N-terminal L-lysyl-[protein] + L-leucyl-tRNA(Leu) = N-terminal L-leucyl-L-lysyl-[protein] + tRNA(Leu) + H(+). The enzyme catalyses N-terminal L-arginyl-[protein] + L-leucyl-tRNA(Leu) = N-terminal L-leucyl-L-arginyl-[protein] + tRNA(Leu) + H(+). It carries out the reaction L-phenylalanyl-tRNA(Phe) + an N-terminal L-alpha-aminoacyl-[protein] = an N-terminal L-phenylalanyl-L-alpha-aminoacyl-[protein] + tRNA(Phe). Its function is as follows. Functions in the N-end rule pathway of protein degradation where it conjugates Leu, Phe and, less efficiently, Met from aminoacyl-tRNAs to the N-termini of proteins containing an N-terminal arginine or lysine. This is Leucyl/phenylalanyl-tRNA--protein transferase from Dechloromonas aromatica (strain RCB).